The chain runs to 362 residues: MHVMRLSIHRLRRFQTVELHPASALNLLTGDNGAGKTSVLEALHLMAYGRSFRGRVRDGLIQQGANDLEVFVEWKEGGSAAGERTRRAGLRHSGQEWTGRLDGEDVAQLGSLCAALAVVTFEPGSHVLISGGGEPRRRFLDWGLFHVEPDFLALWRRYVRALKQRNALLKQGAQPRMLDAWDHELAESGETLTSRRMRYLERLQDRLIPVADVIAPSLGLSALTFAPGWKRHEVSLADALLLARDRDRQNGYTSQGPHRADWMPHFDVLPGKDALSRGQAKLTALACLLAQAEDFAFERSEWPVIALDDLGSELDRHHQARVLHRLVSAPAQMLITGTEIPPGLADAGALLHRFHVEHGQVD.

30–37 contacts ATP; that stretch reads GDNGAGKT.

This sequence belongs to the RecF family.

It localises to the cytoplasm. The RecF protein is involved in DNA metabolism; it is required for DNA replication and normal SOS inducibility. RecF binds preferentially to single-stranded, linear DNA. It also seems to bind ATP. This Xanthomonas oryzae pv. oryzae (strain MAFF 311018) protein is DNA replication and repair protein RecF.